Consider the following 225-residue polypeptide: 3-dehydroquinate dehydratase (225 aa).

3-dehydroquinate-binding positions include 30–32 (EWR) and Arg62. His118 (proton donor/acceptor) is an active-site residue. Lys143 serves as the catalytic Schiff-base intermediate with substrate. 3-dehydroquinate contacts are provided by Arg186, Ser205, and Gln209.

The protein belongs to the type-I 3-dehydroquinase family. In terms of assembly, homodimer.

It catalyses the reaction 3-dehydroquinate = 3-dehydroshikimate + H2O. It functions in the pathway metabolic intermediate biosynthesis; chorismate biosynthesis; chorismate from D-erythrose 4-phosphate and phosphoenolpyruvate: step 3/7. Its function is as follows. Involved in the third step of the chorismate pathway, which leads to the biosynthesis of aromatic amino acids. Catalyzes the cis-dehydration of 3-dehydroquinate (DHQ) and introduces the first double bond of the aromatic ring to yield 3-dehydroshikimate. This is 3-dehydroquinate dehydratase from Streptococcus thermophilus (strain ATCC BAA-250 / LMG 18311).